We begin with the raw amino-acid sequence, 206 residues long: dITP/XTP pyrophosphatase (206 aa).

7-12 lines the substrate pocket; the sequence is SNNAKK. Catalysis depends on Asp72, which acts as the Proton acceptor. Asp72 lines the Mg(2+) pocket. Substrate is bound by residues Ser73, 155-158, Lys182, and 187-188; these read FGYD and HR.

This sequence belongs to the HAM1 NTPase family. As to quaternary structure, homodimer. The cofactor is Mg(2+).

The catalysed reaction is XTP + H2O = XMP + diphosphate + H(+). The enzyme catalyses dITP + H2O = dIMP + diphosphate + H(+). It carries out the reaction ITP + H2O = IMP + diphosphate + H(+). Pyrophosphatase that catalyzes the hydrolysis of nucleoside triphosphates to their monophosphate derivatives, with a high preference for the non-canonical purine nucleotides XTP (xanthosine triphosphate), dITP (deoxyinosine triphosphate) and ITP. Seems to function as a house-cleaning enzyme that removes non-canonical purine nucleotides from the nucleotide pool, thus preventing their incorporation into DNA/RNA and avoiding chromosomal lesions. The protein is dITP/XTP pyrophosphatase of Corynebacterium glutamicum (strain R).